The sequence spans 297 residues: Nucleotide-binding protein Bsph_0448 (297 aa).

ATP is bound at residue 19–26 (GMSGAGKT). 70 to 73 (DMRG) provides a ligand contact to GTP.

This sequence belongs to the RapZ-like family.

Displays ATPase and GTPase activities. This is Nucleotide-binding protein Bsph_0448 from Lysinibacillus sphaericus (strain C3-41).